The primary structure comprises 316 residues: uncharacterized protein (316 aa).

It belongs to the chlamydial CPn_0441/CT_007/TC_0275 family.

This is an uncharacterized protein from Chlamydia muridarum (strain MoPn / Nigg).